Reading from the N-terminus, the 511-residue chain is MAAAEAVHHIHLQNFSRSLLETLNGQRLGGHFCDVTVRIREASLRAHRCVLAAGSPFFQDKLLLGHSEIRVPPVVPAQTVRQLVEFLYSGSLVVAQGEALQVLTAASVLRIQTVIDECTQIIARARAPGTSAPTPLPTPVPPPLAPAQLRHRLRHLLAARPPGHPGAAHSRKQRQPARLQLPAPPTPAKAEGPDADPSLSAAPDDRGDEDDEESDDETDGEDGEGGGPGEGQAPPSFPDCAAGFLTAAADSACEEPPAPTGLADYSGAGRDFLRGAGSAEDVFPDSYVSTWHDEDGAVPEGCPTETPVQPDCILSGSRPPGVKTPGPPVALFPFHLGAPGPPAPPPSAPSGPAPAPPPAFYPTLQPEAAPSTQLGEVPAPSAAPTTAPSGTPARTPGAEPPTYECSHCRKTFSSRKNYTKHMFIHSGEKPHQCAVCWRSFSLRDYLLKHMVTHTGVRAFQCAVCAKRFTQKSSLNVHMRTHRPERAPCPACGKVFSHRALLERHLAAHPAP.

The 64-residue stretch at 33-96 folds into the BTB domain; the sequence is CDVTVRIREA…LYSGSLVVAQ (64 aa). Over residues 159–168 the composition is skewed to low complexity; sequence ARPPGHPGAA. 2 disordered regions span residues 159–241 and 294–403; these read ARPP…PDCA and EDGA…PPTY. Over residues 206–224 the composition is skewed to acidic residues; that stretch reads RGDEDDEESDDETDGEDGE. The span at 339 to 360 shows a compositional bias: pro residues; sequence PGPPAPPPSAPSGPAPAPPPAF. The segment covering 378–397 has biased composition (low complexity); it reads PAPSAAPTTAPSGTPARTPG. 4 consecutive C2H2-type zinc fingers follow at residues 403–425, 431–453, 459–481, and 486–508; these read YECS…MFIH, HQCA…MVTH, FQCA…MRTH, and APCP…LAAH.

The protein belongs to the krueppel C2H2-type zinc-finger protein family.

The protein resides in the nucleus. May be involved in transcriptional regulation. In the central nervous system, may play a role in glial cell differentiation. The chain is Zinc finger and BTB domain-containing protein 45 (ZBTB45) from Homo sapiens (Human).